Consider the following 583-residue polypeptide: Nuclear distribution protein nudE homolog 1 (583 aa).

Residues A14–R195 adopt a coiled-coil conformation. 3 disordered regions span residues L34–T68, T211–S339, and H358–Y583. Over residues A35–E67 the composition is skewed to basic and acidic residues. Polar residues-rich tracts occupy residues P219 to K235, R279 to T319, S329 to S339, N379 to I392, and S399 to K422. Residues R453–P469 are compositionally biased toward low complexity. Polar residues predominate over residues R529 to G538.

It belongs to the nudE family. In terms of assembly, self-associates. Interacts with PAC1.

It is found in the cytoplasm. It localises to the cytoskeleton. In terms of biological role, required for nuclear migration. In Gibberella zeae (strain ATCC MYA-4620 / CBS 123657 / FGSC 9075 / NRRL 31084 / PH-1) (Wheat head blight fungus), this protein is Nuclear distribution protein nudE homolog 1 (NDE1).